A 349-amino-acid polypeptide reads, in one-letter code: Protein Wnt-7a (349 aa).

The first 31 residues, 1-31, serve as a signal peptide directing secretion; the sequence is MNRKARRCLGHLFLSLGMVYLRIGGFSSVVA. 5 disulfide bridges follow: Cys73/Cys84, Cys123/Cys131, Cys133/Cys152, Cys200/Cys214, and Cys202/Cys209. N-linked (GlcNAc...) asparagine glycosylation is found at Asn83 and Asn127. A lipid anchor (O-palmitoleoyl serine; by PORCN) is attached at Ser206. The disordered linker stretch occupies residues 238–266; the sequence is VEPVRASRNKRPTFLKIKKPLSYRKPMDT. Intrachain disulfides connect Cys278–Cys309, Cys294–Cys304, Cys308–Cys348, Cys324–Cys339, Cys326–Cys336, and Cys331–Cys332. An N-linked (GlcNAc...) asparagine glycan is attached at Asn295.

It belongs to the Wnt family. Forms a soluble 1:1 complex with AFM; this prevents oligomerization and is required for prolonged biological activity. The complex with AFM may represent the physiological form in body fluids. Interacts with PORCN. Interacts (via intrinsically disordered linker region) with RECK; interaction with RECK confers ligand selectivity for Wnt7 in brain endothelial cells and allows these cells to selectively respond to Wnt7. Interacts with FZD5. In terms of processing, palmitoleoylation is required for efficient binding to frizzled receptors. Depalmitoleoylation leads to Wnt signaling pathway inhibition.

Its subcellular location is the secreted. The protein localises to the extracellular space. The protein resides in the extracellular matrix. Ligand for members of the frizzled family of seven transmembrane receptors that functions in the canonical Wnt/beta-catenin signaling pathway. Plays an important role in embryonic development, including dorsal versus ventral patterning during limb development, skeleton development and urogenital tract development. Required for central nervous system (CNS) angiogenesis and blood-brain barrier regulation. Required for normal, sexually dimorphic development of the Mullerian ducts, and for normal fertility in both sexes. Required for normal neural stem cell proliferation in the hippocampus dentate gyrus. Required for normal progress through the cell cycle in neural progenitor cells, for self-renewal of neural stem cells, and for normal neuronal differentiation and maturation. Promotes formation of synapses via its interaction with FZD5. The protein is Protein Wnt-7a (WNT7A) of Pongo pygmaeus (Bornean orangutan).